The sequence spans 448 residues: N-succinylarginine dihydrolase (448 aa).

Residues 19–28, N110, and 137–138 contribute to the substrate site; these read AGLSSGNIAS and HR. The active site involves E174. R216 provides a ligand contact to substrate. The active site involves H252. Substrate is bound by residues D254 and N366. The active-site Nucleophile is the C372.

Belongs to the succinylarginine dihydrolase family. In terms of assembly, homodimer.

The enzyme catalyses N(2)-succinyl-L-arginine + 2 H2O + 2 H(+) = N(2)-succinyl-L-ornithine + 2 NH4(+) + CO2. It functions in the pathway amino-acid degradation; L-arginine degradation via AST pathway; L-glutamate and succinate from L-arginine: step 2/5. Functionally, catalyzes the hydrolysis of N(2)-succinylarginine into N(2)-succinylornithine, ammonia and CO(2). The sequence is that of N-succinylarginine dihydrolase from Legionella pneumophila (strain Lens).